The following is a 240-amino-acid chain: UDP-2,3-diacylglucosamine hydrolase (240 aa).

Asp-8, His-10, Asp-41, Asn-78, and His-113 together coordinate Mn(2+). 78 to 79 (NR) is a binding site for substrate. Residues Asp-121, Ser-159, Asn-163, Lys-166, and His-194 each coordinate substrate. Mn(2+) contacts are provided by His-194 and His-196.

The protein belongs to the LpxH family. The cofactor is Mn(2+).

The protein localises to the cell inner membrane. It carries out the reaction UDP-2-N,3-O-bis[(3R)-3-hydroxytetradecanoyl]-alpha-D-glucosamine + H2O = 2-N,3-O-bis[(3R)-3-hydroxytetradecanoyl]-alpha-D-glucosaminyl 1-phosphate + UMP + 2 H(+). It participates in glycolipid biosynthesis; lipid IV(A) biosynthesis; lipid IV(A) from (3R)-3-hydroxytetradecanoyl-[acyl-carrier-protein] and UDP-N-acetyl-alpha-D-glucosamine: step 4/6. Its function is as follows. Hydrolyzes the pyrophosphate bond of UDP-2,3-diacylglucosamine to yield 2,3-diacylglucosamine 1-phosphate (lipid X) and UMP by catalyzing the attack of water at the alpha-P atom. Involved in the biosynthesis of lipid A, a phosphorylated glycolipid that anchors the lipopolysaccharide to the outer membrane of the cell. The polypeptide is UDP-2,3-diacylglucosamine hydrolase (Shewanella baltica (strain OS155 / ATCC BAA-1091)).